A 106-amino-acid polypeptide reads, in one-letter code: Large ribosomal subunit protein uL24 (106 aa).

Residues 69 to 106 (SNLNPVDPKTGKATRVGRKVSSEGTLVRYSKKSGEEIK) form a disordered region.

The protein belongs to the universal ribosomal protein uL24 family. In terms of assembly, part of the 50S ribosomal subunit.

Functionally, one of two assembly initiator proteins, it binds directly to the 5'-end of the 23S rRNA, where it nucleates assembly of the 50S subunit. Its function is as follows. One of the proteins that surrounds the polypeptide exit tunnel on the outside of the subunit. In Bacteroides fragilis (strain ATCC 25285 / DSM 2151 / CCUG 4856 / JCM 11019 / LMG 10263 / NCTC 9343 / Onslow / VPI 2553 / EN-2), this protein is Large ribosomal subunit protein uL24.